Consider the following 468-residue polypeptide: MADDAGLETPLCSEQFGSGEARGCRAAADGSLQWEVGGWRWWGLSRAFTVKPEGRDAGEVGASGAPSPPLSGLQAVFLPQGFPDSVSPDYLPYQLWDSVQAFASSLSGSLATQAVLLGIGVGNAKATVSAATATWLVKDSTGMLGRIVFAWWKGSKLDCNAKQWRLFADILNDVAMFLEIMAPVYPICFTMTVSTSNLAKCIVSVAGGATRAALTVHQARRNNMADVSAKDSSQETLVNLAGLLVSLLMLPLVSGCPGFSLGCFFFLTALHIYANYRAVRALVMETLNEGRLRLVLKHYLQRGEVLDPTAANRMEPLWTGFWPAPSLSLGVPLHRLVSSVFELQQLVEGHQESYLLCWDQSQNQVQVVLNQKAGPKTILRAATHGLMLGALQGDGPLPAELEELRNRVRAGPKKESWVVVKETHEVLDMLFPKFLKGLQDAGWKTEKHQLEVDEWRATWLLSPEKKVL.

Ala-2 carries the N-acetylalanine modification. Phosphothreonine is present on Thr-49. A helical membrane pass occupies residues 247–267; it reads LLMLPLVSGCPGFSLGCFFFL.

The protein belongs to the RUS1 family.

It localises to the membrane. The polypeptide is RUS family member 1 (Homo sapiens (Human)).